The chain runs to 67 residues: Gene 51 protein (67 aa).

The sequence is that of Gene 51 protein (51) from Mycobacterium (Mycobacteriophage L5).